The primary structure comprises 332 residues: Cell growth regulator with RING finger domain protein 1 (332 aa).

Residues 274-309 (CVVCQNGTVNWVLLPCRHTCLCDGCVKYFQQCPMCR) form an RING-type zinc finger.

Ubiquitously expressed with high expression in testis and the cerebellum.

It localises to the nucleus. The protein localises to the endoplasmic reticulum. Able to inhibit growth in several cell lines. This is Cell growth regulator with RING finger domain protein 1 (CGRRF1) from Homo sapiens (Human).